A 507-amino-acid polypeptide reads, in one-letter code: ATP synthase subunit alpha (507 aa).

168–175 (GDRQTGKT) is a binding site for ATP.

The protein belongs to the ATPase alpha/beta chains family. F-type ATPases have 2 components, CF(1) - the catalytic core - and CF(0) - the membrane proton channel. CF(1) has five subunits: alpha(3), beta(3), gamma(1), delta(1), epsilon(1). CF(0) has three main subunits: a(1), b(2) and c(9-12). The alpha and beta chains form an alternating ring which encloses part of the gamma chain. CF(1) is attached to CF(0) by a central stalk formed by the gamma and epsilon chains, while a peripheral stalk is formed by the delta and b chains.

The protein localises to the cell membrane. It carries out the reaction ATP + H2O + 4 H(+)(in) = ADP + phosphate + 5 H(+)(out). In terms of biological role, produces ATP from ADP in the presence of a proton gradient across the membrane. The alpha chain is a regulatory subunit. This chain is ATP synthase subunit alpha, found in Mesomycoplasma hyopneumoniae (strain 232) (Mycoplasma hyopneumoniae).